The chain runs to 133 residues: Phosphoribosyl-ATP pyrophosphatase (133 aa).

A disordered region spans residues 1–22; that stretch reads MGKPATKPAPKPSKQQDDKKSD.

Belongs to the PRA-PH family.

The protein localises to the cytoplasm. The enzyme catalyses 1-(5-phospho-beta-D-ribosyl)-ATP + H2O = 1-(5-phospho-beta-D-ribosyl)-5'-AMP + diphosphate + H(+). It functions in the pathway amino-acid biosynthesis; L-histidine biosynthesis; L-histidine from 5-phospho-alpha-D-ribose 1-diphosphate: step 2/9. This chain is Phosphoribosyl-ATP pyrophosphatase, found in Gluconobacter oxydans (strain 621H) (Gluconobacter suboxydans).